Reading from the N-terminus, the 606-residue chain is Leucine-rich repeat and immunoglobulin-like domain-containing nogo receptor-interacting protein 2 (606 aa).

A signal peptide spans 1–27 (MLHTAISCWQPFLGLAVVLIFMGSTIG). The LRRNT domain maps to 28 to 57 (CPARCECSAQNKSVSCHRRRLIAIPEGIPI). Residues 28 to 545 (CPARCECSAQ…LDLKTILVST (518 aa)) are Extracellular-facing. The N-linked (GlcNAc...) asparagine glycan is linked to Asn38. LRR repeat units lie at residues 58 to 79 (ETKILDLSKNRLKSVNPEEFIS), 82 to 103 (LLEEIDLSDNIIANVEPGAFNN), 106 to 127 (NLRSLRLKGNRLKLVPLGVFTG), 130 to 151 (NLTKLDISENKIVILLDYMFQD), 154 to 175 (NLKSLEVGDNDLVYISHRAFSG), 178 to 199 (SLEQLTLEKCNLTAVPTEALSH), 202 to 223 (SLISLHLKHLNINNMPVYAFKR), 226 to 247 (HLKHLEIDYWPLLDMMPANSLY), 250 to 271 (NLTSLSVTNTNLSTVPFLAFKH), 274 to 295 (YLTHLNLSYNPISTIEAGMFSD), 298 to 319 (RLQELHIVGAQLRTIEPHSFQG), and 322 to 343 (FLRVLNVSQNLLETLEENVFSS). N-linked (GlcNAc...) asparagine glycosylation is present at Asn130. Asn188 carries an N-linked (GlcNAc...) asparagine glycan. The N-linked (GlcNAc...) asparagine glycan is linked to Asn279. An N-linked (GlcNAc...) asparagine glycan is attached at Asn327. The region spanning 355 to 409 (NPLACDCRLLWILQRQPTLQFGGQQPMCAGPDTIRERSFKDFHSTALSFYFTCKK) is the LRRCT domain. Residues 410-499 (PKIREKKLQH…GNDTFTASLT (90 aa)) enclose the Ig-like C2-type domain. Cys432 and Cys483 are oxidised to a cystine. Residues 546–566 (AMGCFTFLGVVLFCFLLLFVW) form a helical membrane-spanning segment. At 567-606 (SRGKGKHKNSIDLEYVPRKNNGAVVEGEVAGPRRFNMKMI) the chain is on the cytoplasmic side.

It localises to the membrane. In Homo sapiens (Human), this protein is Leucine-rich repeat and immunoglobulin-like domain-containing nogo receptor-interacting protein 2 (LINGO2).